The chain runs to 1789 residues: Genome polyprotein (1789 aa).

A disordered region spans residues 1 to 25 (MMMASKDVVPTAASSENANNNSSIK). The tract at residues 1-183 (MMMASKDVVP…MCPLPPVDQR (183 aa)) is interaction with host MAP1LC3A/LC3. Positions 12 to 23 (AASSENANNNSS) are enriched in low complexity. Residues 184–398 (STTPATEPTI…ASLLPDFHLQ (215 aa)) form an interaction with NTPase region. Residues 301–398 (HPTQDWSRDT…ASLLPDFHLQ (98 aa)) are interaction with NS4. Host ER membrane association regions lie at residues 318–349 (KLEMVRDAVLAAINGLVSRPFKDLLGKLKPLN) and 360–398 (TFMGVVEMVVLLLELFGIFWNPPDVSNFIASLLPDFHLQ). The tract at residues 399-574 (GPEDLARDLV…GKTKAAEHLA (176 aa)) is interaction with NS1-2 and NS4 and homooligomerization. Positions 532-697 (RISMARAALA…EHTRKVSPGD (166 aa)) constitute an SF3 helicase domain. Residue 560–567 (GPPGIGKT) participates in ATP binding. Residues 651–756 (AIVITTNAPG…AVALTMERQD (106 aa)) form an important for mitochondrion targeting region. The tract at residues 826–832 (YIIESDG) is functions as endoplasmic reticulum export signal. Residues 865–910 (RAVAYASCFQSAITTILQMAGSALVINRAVKRMFGTRTAAMALEGP) are host membrane association. A disordered region spans residues 958–981 (DAVPEGKNKGKTKKGRGRKNNYNA). Residues 966–976 (KGKTKKGRGRK) show a composition bias toward basic residues. The interval 989–994 (DEEYEE) is acidic. Tyrosine 992 bears the O-(5'-phospho-RNA)-tyrosine mark. Residues 1084–1100 (WADDDREVDYNEKINFE) are interaction with host EIF4G. The 181-residue stretch at 1101 to 1281 (APPTLWSRVT…QAGEGETALE (181 aa)) folds into the Peptidase C37 domain. Catalysis depends on for 3CLpro activity residues histidine 1130, glutamate 1154, and cysteine 1239. Residues 1516-1637 (KNHFDADYTA…STDIDFDPAR (122 aa)) enclose the RdRp catalytic domain. Mg(2+) is bound by residues aspartate 1520, aspartate 1522, aspartate 1624, and glutamate 1625.

In terms of assembly, homodimer. Homooligomer. Interacts with NTPase; this interaction increases the proapoptotic activity of the NTPase and is crucial for the formation of the viral replication complex. Interacts with NS4; this interaction is crucial for the formation of the viral replication complex. Interacts (via N-terminus) with host VAPA. Interacts with host MAP1LC3A/LC3; this interaction does not seem to be linked to host autophagy, but rather plays a role in the formation of viral factories. As to quaternary structure, homooligomer. Interacts with NS1-2; this interaction increases the proapoptotic activity of the NTPase and is crucial for the formation of the viral replication complex. Interacts with NS4; this interaction increases the proapoptotic activity of the NTPase. Homodimer. Monomer; in solution. In terms of assembly, interacts with NTPase; this interaction increases the proapoptotic activity of the NTPase. Interacts with NS1-2; this interaction is crucial for the formation of the viral replication complex. As to quaternary structure, monomer. Interacts with the RNA-directed RNA polymerase; this interaction induces the multimerization of the RdRp and enhances its activity. Interacts with host IEF4G1; this interaction plays a role in translation of viral proteins. Homohexamer; also forms fibrous hexameric oligomer. Interacts with the viral genome-linked protein; this interaction induces the multimerization of the RdRp and enhances its activity. It depends on Mg(2+) as a cofactor. Mn(2+) serves as cofactor. In terms of processing, specific enzymatic cleavages in vivo yield mature proteins. 3CLpro is first autocatalytically cleaved, then processes the whole polyprotein. NS1/2-3 and NS3-4 sites are cleaved rapidly and NS4-5, NS5-6, and NS6-7 sites are processed subsequently and less efficiently. Post-translationally, VPg is uridylylated by the polymerase and is covalently attached to the 5'-end of the polyadenylated genomic and subgenomic RNAs. This uridylylated form acts as a nucleotide-peptide primer for the polymerase. Cleaved by host CASP3/caspase 3 at 18-22 h.p.i. The cleavage allows NS1 secretion, which is essential for intestinal infection and resistance to IFN-lambda.

Its subcellular location is the host Golgi apparatus membrane. It is found in the secreted. It localises to the host endoplasmic reticulum membrane. The protein resides in the host cytoplasm. The protein localises to the host perinuclear region. It carries out the reaction a ribonucleoside 5'-triphosphate + H2O = a ribonucleoside 5'-diphosphate + phosphate + H(+). The catalysed reaction is Endopeptidase with a preference for cleavage when the P1 position is occupied by Glu-|-Xaa and the P1' position is occupied by Gly-|-Yaa.. It catalyses the reaction RNA(n) + a ribonucleoside 5'-triphosphate = RNA(n+1) + diphosphate. Its activity is regulated as follows. Inhibited by the chemical compound K36/GC376, which covalently binds to the nucleophilic cysteine residue. Inhibited by various macrocyclic inhibitors. With respect to regulation, inhibited by the guanidine salt GuHCl. Functionally, induces the proliferation of the host smooth ER membranes forming long tubular structures. These remodeled membranes probably form the viral factories that contain the replication complex. Induces the disassembly of host Golgi. May play a role in viral replication by interacting with host VAPA, a vesicle-associated membrane protein that plays a role in SNARE-mediated vesicle fusion. This interaction may target replication complex to intracellular membranes. Its function is as follows. Displays NTPase activity and RNA helix-unwinding activity. Displays RNA chaperone-like activity and destabilizes dsRNA. Induces the formation of convoluted membranes derived from the host ER. These remodeled membranes probably form the viral factories that contain the replication complex. Initiates host cell death by targeting the mitochondrial outer membrane, leading to the permeabilization of mitochondria, programmed host cell death and viral egress. Probably plays a role in preventing the assembly of host stress granules. Probable key protein responsible for the formation of membrane alterations by the virus. Induces the formation of convoluted membranes derived from the host ER. These remodeled membranes probably form the viral factories that contain the replication complex. May play a role in targeting replication complex to intracellular membranes. Induces the disassembly of host Golgi and antagonism of Golgi-dependent cellular protein secretion, probably via the mislocalization of COPII-coated vesicles. In terms of biological role, viral genome-linked protein is covalently linked to the 5'-end of the positive-strand, negative-strand genomic RNAs and subgenomic RNA. Acts as a genome-linked replication primer. May recruit ribosome to viral RNA thereby promoting viral proteins translation. Interacts with host translation initiation complex to allow the translation of viral proteins. Induces the formation of aggregates of RNA-directed RNA polymerase in the presence of RNA. Through its interaction with the viral RNA-directed RNA polymerase, plays a crucial role in enhancing the polymerase activity. Functionally, processes the polyprotein. 3CLpro-RdRp is first released by autocleavage, then all other proteins are cleaved. May cleave host polyadenylate-binding protein thereby inhibiting cellular translation. Its function is as follows. Replicates genomic and antigenomic RNA by recognizing replications specific signals. Also transcribes a subgenomic mRNA by initiating RNA synthesis internally on antigenomic RNA. This sgRNA codes for structural proteins. Catalyzes the covalent attachment VPg with viral RNAs. The sequence is that of Genome polyprotein from Norovirus (strain Human/NoV/United States/Norwalk/1968/GI) (Hu/NV/NV/1968/US).